The primary structure comprises 197 residues: MYTLIKLTSEYTSRAISFTSRNFVASEPTSIALKLTTCDFTTSFQNIMKQCVDYGHSFAFVDADDNIKAQILNIPYDAYENMHYGNIRETDPMFDLFGNLDSYTPDDKCLYVFAIGSEVTGKGLATKLLKKTIEESSSHGFKYIYGDCTNIISQNMFEKHGFETVGSVKYKGYQYGITKPFDSINCTEYIKRMVKTI.

An acetyl-CoA-binding site is contributed by N22. Residue E27 is part of the active site. One can recognise an N-acetyltransferase domain in the interval S102 to D182. Residues I115, S117, G121, G123, A125, T126, T149, N150, and K159 each coordinate acetyl-CoA.

This sequence belongs to the acetyltransferase family.

It catalyses the reaction spermine + acetyl-CoA = N(1)-acetylspermine + CoA + H(+). The catalysed reaction is spermidine + acetyl-CoA = N(1)-acetylspermidine + CoA + H(+). The enzyme catalyses spermidine + acetyl-CoA = N(8)-acetylspermidine + CoA + H(+). It carries out the reaction putrescine + acetyl-CoA = N-acetylputrescine + CoA + H(+). It catalyses the reaction cadaverine + acetyl-CoA = N-acetylcadaverine + CoA + H(+). The catalysed reaction is sym-homospermidine + acetyl-CoA = N(1)-acetyl-sym-homospermidine + CoA + H(+). In terms of biological role, acetylates polyamines such as spermine, spermidine, cadaverine, homospermidine and putrescine (the latter with low efficiency). May play a role in the regulation of polyamine catabolism in the host during viral replication. This chain is Viral polyamine acetyltransferase, found in Chlorella (PBCV-1).